The chain runs to 373 residues: Dof zinc finger protein 3 (373 aa).

The disordered stretch occupies residues 1–23 (MASGGALSPVEEKPTVVKTTKAE). Residues 10–23 (VEEKPTVVKTTKAE) are compositionally biased toward basic and acidic residues. The Dof-type zinc-finger motif lies at 45 to 99 (PCCPRCNSIKTKFCYYNNYSMAQPRYFCRECRRYWTQGGSLRNVPVGGGCRKSKR). 4 residues coordinate Zn(2+): C47, C50, C72, and C75. Positions 297–327 (ALGGADEQQGGGDGGEAVMTKDTGGGASSSA) are disordered.

In terms of assembly, interacts with RISBZ1/BZIP58.

The protein localises to the nucleus. Functionally, transcriptional activator that binds specifically to the DNA consensus core sequence 5'-AAAG-3' also known as prolamin box. Can activate the expression of genes encoding for the seed storage proteins glutelin, prolamin and globulin. Functions synergistically with RISBZ/BZIP58 to positively regulate quantitatively many seed storage proteins. Functions synergistically with RISBZ1/BZIP58 to positively regulate some metabolic enzymes, such as alanine aminotransferase and pyruvate phosphate dikinase, that are expressed in developing seeds. Functions synergistically with RISBZ1/BZIP58 to positively regulate genes that are key players in the development of aleurone layers. Functions synergistically with RISBZ1/BZIP58 to positively regulate the glutelin GLUD-1 gene in endosperm of developing seeds. Can activate the expression of the bifunctional lysine-degrading enzyme, lysine ketoglutarate reductase/saccharopine dehydrogenase (LKR/SDH), one of the key regulators determining free lysine content in plants. In germinating seeds, involved in the gibberellin-mediated activation of the alpha-amylase AMY1.1/AMY1A gene. This chain is Dof zinc finger protein 3, found in Oryza sativa subsp. japonica (Rice).